The primary structure comprises 52 residues: Stable plasmid inheritance protein (52 aa).

The helical transmembrane segment at 6 to 26 (SSLVWCVLIVCLTLLIFTYLT) threads the bilayer.

The protein belongs to the Hok/Gef family.

The protein localises to the cell inner membrane. Its function is as follows. Toxic component of a type I toxin-antitoxin (TA) system. Part of the plasmid maintenance system, encodes a toxic protein that collapses the transmembrane potential and arrests respiration. When the adjacent non-translated flmB (sok) gene is disrupted FlmA no longer functions in plasmid maintenance (i.e. FlmB probably encodes an antisense antitoxin RNA). Translation of FlmA may be coupled to the upstream flmC gene. The polypeptide is Stable plasmid inheritance protein (flmA) (Escherichia coli O157:H7).